The chain runs to 203 residues: ATP-dependent Clp protease proteolytic subunit (203 aa).

Ser100 functions as the Nucleophile in the catalytic mechanism. His125 is an active-site residue.

Belongs to the peptidase S14 family. As to quaternary structure, fourteen ClpP subunits assemble into 2 heptameric rings which stack back to back to give a disk-like structure with a central cavity, resembling the structure of eukaryotic proteasomes.

The protein localises to the cytoplasm. The catalysed reaction is Hydrolysis of proteins to small peptides in the presence of ATP and magnesium. alpha-casein is the usual test substrate. In the absence of ATP, only oligopeptides shorter than five residues are hydrolyzed (such as succinyl-Leu-Tyr-|-NHMec, and Leu-Tyr-Leu-|-Tyr-Trp, in which cleavage of the -Tyr-|-Leu- and -Tyr-|-Trp bonds also occurs).. Cleaves peptides in various proteins in a process that requires ATP hydrolysis. Has a chymotrypsin-like activity. Plays a major role in the degradation of misfolded proteins. This Anaeromyxobacter dehalogenans (strain 2CP-1 / ATCC BAA-258) protein is ATP-dependent Clp protease proteolytic subunit.